Here is a 214-residue protein sequence, read N- to C-terminus: Cytochrome b (214 aa).

4 helical membrane passes run 31-51, 75-96, 111-131, and 176-196; these read FGSM…FLAI, WIMQ…YTHI, WLSG…GYVL, and FFAL…IHIL. Heme b-binding residues include His81 and His95. Heme b is bound by residues His180 and His194. Position 199 (His199) interacts with a ubiquinone.

It belongs to the cytochrome b family. The cytochrome bc1 complex contains 3 respiratory subunits (MT-CYB, CYC1 and UQCRFS1), 2 core proteins (UQCRC1 and UQCRC2) and probably 6 low-molecular weight proteins. It depends on heme b as a cofactor.

The protein localises to the mitochondrion inner membrane. Functionally, component of the ubiquinol-cytochrome c reductase complex (complex III or cytochrome b-c1 complex) that is part of the mitochondrial respiratory chain. The b-c1 complex mediates electron transfer from ubiquinol to cytochrome c. Contributes to the generation of a proton gradient across the mitochondrial membrane that is then used for ATP synthesis. In Lachesis muta muta (Bushmaster), this protein is Cytochrome b (MT-CYB).